A 210-amino-acid polypeptide reads, in one-letter code: Fibroblast growth factor 8 (210 aa).

An N-terminal signal peptide occupies residues 1-27 (MRLIPSRLSYLFLHLFAFCYYAQVTIQ).

Belongs to the heparin-binding growth factors family. As to quaternary structure, monomer. Homodimer.

The protein resides in the secreted. In terms of biological role, plays an important role in the regulation of embryonic development, cell proliferation, cell differentiation and cell migration. Required for Kupffer's vesicle ciliogenesis. The chain is Fibroblast growth factor 8 from Danio rerio (Zebrafish).